A 515-amino-acid chain; its full sequence is MMTDSLILTPGTLSLADLRRLAFSAPSVTLAAGVRDTLAQAARSVDRIVADGRPVYGVNTGFGKLARTRIADANLRDLQRNLVLSHAAGIGAPMDDRTVRLILLLKANGLARGHSGVRPEIVDLLLEMGNRGVLPVIPQKGSVGASGDLAPLAHMTAVLIGAGQARVDGRVLPGDQALRAVGLAPVELGPKEGLALLNGTQASTALALVALFDAERVFQAALVTGALTLDAARGTDAPFDPRLHALRGQKGQIECAALYRALMADSAIRASHREDDERVQDPYCLRCQPQVMGACLDSLRHAASVLLIEANAVSDNPIHFAETDEMLSGGNFHAEPVAIAADLMAIAVSEVGAIAERRLALLVDAQMSGLPPFLVRDSGVNSGFMIAQVTAAALASENKTLAHPASIDSLPTSANQEDHVSMATFAARRVGDIVANVRDIVAIEYLAAVQGLDFLAPLQTSRPLAGAAAALRARVPFYDRDRIFTPDIEAARDLIADGVPTLLPGIADVLPRLEV.

Positions 145-147 form a cross-link, 5-imidazolinone (Ala-Gly); the sequence is ASG. Ser-146 is modified (2,3-didehydroalanine (Ser)).

It belongs to the PAL/histidase family. In terms of processing, contains an active site 4-methylidene-imidazol-5-one (MIO), which is formed autocatalytically by cyclization and dehydration of residues Ala-Ser-Gly.

The protein resides in the cytoplasm. It catalyses the reaction L-histidine = trans-urocanate + NH4(+). It functions in the pathway amino-acid degradation; L-histidine degradation into L-glutamate; N-formimidoyl-L-glutamate from L-histidine: step 1/3. This is Histidine ammonia-lyase from Gluconacetobacter diazotrophicus (strain ATCC 49037 / DSM 5601 / CCUG 37298 / CIP 103539 / LMG 7603 / PAl5).